We begin with the raw amino-acid sequence, 522 residues long: Serine/threonine-protein kinase BSK1-2 (522 aa).

The tract at residues 1–54 (MGCCGSSLRVGSHAPEKPPRRARPPPPPPQPHHPRRPSFTLNAHQAAASSSAAS) is disordered. Gly2 carries N-myristoyl glycine lipidation. Positions 79–338 (ANIVSESGEK…KLVSILQPLQ (260 aa)) constitute a Protein kinase domain. Residues 85-93 (SGEKAPNLV) and Lys111 contribute to the ATP site. The active-site Proton acceptor is the Asp205.

This sequence belongs to the protein kinase superfamily. Ser/Thr protein kinase family.

It is found in the cell membrane. The catalysed reaction is L-seryl-[protein] + ATP = O-phospho-L-seryl-[protein] + ADP + H(+). It carries out the reaction L-threonyl-[protein] + ATP = O-phospho-L-threonyl-[protein] + ADP + H(+). Its function is as follows. Probable serine/threonine kinase that functions as a positive regulator of plant immunity. May be involved in the regulation of pattern-triggered immunity (PTI). Does not seem to be involved in responses to brassinosteroid (BR) signaling. This is Serine/threonine-protein kinase BSK1-2 from Oryza sativa subsp. japonica (Rice).